The sequence spans 396 residues: Tryptophan synthase beta chain (396 aa).

At Lys86 the chain carries N6-(pyridoxal phosphate)lysine.

Belongs to the TrpB family. As to quaternary structure, tetramer of two alpha and two beta chains. The cofactor is pyridoxal 5'-phosphate.

It catalyses the reaction (1S,2R)-1-C-(indol-3-yl)glycerol 3-phosphate + L-serine = D-glyceraldehyde 3-phosphate + L-tryptophan + H2O. Its pathway is amino-acid biosynthesis; L-tryptophan biosynthesis; L-tryptophan from chorismate: step 5/5. Functionally, the beta subunit is responsible for the synthesis of L-tryptophan from indole and L-serine. The chain is Tryptophan synthase beta chain from Francisella philomiragia subsp. philomiragia (strain ATCC 25017 / CCUG 19701 / FSC 153 / O#319-036).